The sequence spans 649 residues: Drebrin (649 aa).

An N-acetylalanine modification is found at Ala2. Residues 3–134 (GVSFSGHRLE…DAGAIGQRLS (132 aa)) enclose the ADF-H domain. 2 positions are modified to phosphoserine: Ser141 and Ser142. Basic and acidic residues-rich tracts occupy residues 208-236 (QERM…EEHR) and 288-298 (DNPREFFKQQE). 3 disordered regions span residues 208–420 (QERM…PAED), 477–502 (DLWP…PSGT), and 538–620 (EPPA…PPPV). Phosphothreonine occurs at positions 331 and 335. Polar residues predominate over residues 334–348 (PTRSPSDSSTASTPV). Phosphoserine is present on residues Ser337, Ser339, and Ser345. Thr346 is modified (phosphothreonine). A compositionally biased stretch (pro residues) spans 363–374 (QPPPLPPPPPPA). Phosphoserine is present on Ser416. At Thr497 the chain carries Phosphothreonine. Residues 582–594 (NGETTQKEGTQAS) are compositionally biased toward polar residues. Ser601 is subject to Phosphoserine.

As to quaternary structure, interacts with RUFY3. Interacts with CXCR4; this interaction is enhanced by antigenic stimulation. Interacts (via ADF-H domain) with ZMYND8 (via N-terminus); the interaction leads to sequestering of ZMYND8 in the cytoplasm. In terms of tissue distribution, expressed in the brain, with expression in the molecular layer of the dentate gyrus, stratum pyramidale, and stratum radiatum of the hippocampus (at protein level). Also expressed in the terminal varicosities distributed along dendritic trees of pyramidal cells in CA4 and CA3 of the hippocampus (at protein level). Expressed in pyramidal cells in CA2, CA1 and the subiculum of the hippocampus (at protein level). Expressed in peripheral blood lymphocytes, including T-cells (at protein level). Expressed in the brain. Expressed in the heart, placenta, lung, skeletal muscle, kidney, pancreas, skin fibroblasts, gingival fibroblasts and bone-derived cells.

Its subcellular location is the cytoplasm. The protein localises to the cell projection. It is found in the dendrite. The protein resides in the cell cortex. It localises to the cell junction. Its subcellular location is the growth cone. In terms of biological role, actin cytoskeleton-organizing protein that plays a role in the formation of cell projections. Required for actin polymerization at immunological synapses (IS) and for the recruitment of the chemokine receptor CXCR4 to IS. Plays a role in dendritic spine morphogenesis and organization, including the localization of the dopamine receptor DRD1 to the dendritic spines. Involved in memory-related synaptic plasticity in the hippocampus. This is Drebrin (DBN1) from Homo sapiens (Human).